A 219-amino-acid chain; its full sequence is Probable GTP-binding protein EngB (219 aa).

The 184-residue stretch at 24–207 (VQPEIAFAGR…HALIESWVRP (184 aa)) folds into the EngB-type G domain. GTP-binding positions include 32 to 39 (GRSNAGKS), 59 to 63 (GRTQH), 81 to 84 (DLPG), 148 to 151 (TKCD), and 186 to 188 (FSA). Residues Ser39 and Thr61 each contribute to the Mg(2+) site.

This sequence belongs to the TRAFAC class TrmE-Era-EngA-EngB-Septin-like GTPase superfamily. EngB GTPase family. It depends on Mg(2+) as a cofactor.

Necessary for normal cell division and for the maintenance of normal septation. The chain is Probable GTP-binding protein EngB from Burkholderia multivorans (strain ATCC 17616 / 249).